The sequence spans 39 residues: Photosystem I reaction center subunit IX (39 aa).

A helical membrane pass occupies residues 4–24 (FLTTAPVVAAIWFTLTAGILI).

It belongs to the PsaJ family.

It is found in the cellular thylakoid membrane. May help in the organization of the PsaE and PsaF subunits. In Synechococcus sp. (strain CC9311), this protein is Photosystem I reaction center subunit IX.